Consider the following 87-residue polypeptide: UPF0248 protein TON_0940 (87 aa).

Belongs to the UPF0248 family.

The sequence is that of UPF0248 protein TON_0940 from Thermococcus onnurineus (strain NA1).